A 1159-amino-acid chain; its full sequence is ATP-dependent helicase/deoxyribonuclease subunit B (1159 aa).

The region spanning 1-275 (MEFNTYIGRA…TYFNTFYRYN (275 aa)) is the UvrD-like helicase ATP-binding domain. 8–15 (GRAGTGKS) contacts ATP. One can recognise a UvrD-like helicase C-terminal domain in the interval 269 to 583 (NTFYRYNNDD…SIGTMDLAKV (315 aa)). Cys-784, Cys-1112, Cys-1115, and Cys-1121 together coordinate [4Fe-4S] cluster.

Belongs to the helicase family. AddB/RexB type 1 subfamily. Heterodimer of AddA and AddB. Mg(2+) is required as a cofactor. It depends on [4Fe-4S] cluster as a cofactor.

Its function is as follows. The heterodimer acts as both an ATP-dependent DNA helicase and an ATP-dependent, dual-direction single-stranded exonuclease. Recognizes the chi site generating a DNA molecule suitable for the initiation of homologous recombination. The AddB subunit has 5' -&gt; 3' nuclease activity but not helicase activity. The chain is ATP-dependent helicase/deoxyribonuclease subunit B from Staphylococcus epidermidis (strain ATCC 35984 / DSM 28319 / BCRC 17069 / CCUG 31568 / BM 3577 / RP62A).